Here is a 96-residue protein sequence, read N- to C-terminus: Transcription and mRNA export factor SUS1 (96 aa).

A Glycyl lysine isopeptide (Lys-Gly) (interchain with G-Cter in ubiquitin) cross-link involves residue Lys-68.

The protein belongs to the ENY2 family. In terms of assembly, component of the nuclear pore complex (NPC)-associated TREX-2 complex (transcription and export complex 2), composed of at least SUS1, SAC3, THP1, SEM1, and CDC31. TREX-2 contains 2 SUS1 chains. The TREX-2 complex interacts with the nucleoporin NUP1. Component of the 1.8 MDa SAGA transcription coactivator-HAT complex. SAGA is built of 5 distinct domains with specialized functions. Within the SAGA complex, SUS1, SGF11, SGF73 and UBP8 form an additional subcomplex of SAGA called the DUB module (deubiquitination module). Interacts directly with THP1, SAC3, SGF11, and with the RNA polymerase II.

It localises to the nucleus. It is found in the nucleoplasm. The protein resides in the cytoplasm. The protein localises to the P-body. Functionally, involved in mRNA export coupled transcription activation by association with both the TREX-2 and the SAGA complexes. At the promoters, SAGA is required for recruitment of the basal transcription machinery. It influences RNA polymerase II transcriptional activity through different activities such as TBP interaction and promoter selectivity, interaction with transcription activators, and chromatin modification through histone acetylation and deubiquitination. Within the SAGA complex, participates in a subcomplex required for deubiquitination of H2B and for the maintenance of steady-state H3 methylation levels. The TREX-2 complex functions in docking export-competent ribonucleoprotein particles (mRNPs) to the nuclear entrance of the nuclear pore complex (nuclear basket). TREX-2 participates in mRNA export and accurate chromatin positioning in the nucleus by tethering genes to the nuclear periphery. May also be involved in cytoplasmic mRNA decay by interaction with components of P-bodies. The polypeptide is Transcription and mRNA export factor SUS1 (Saccharomyces cerevisiae (strain RM11-1a) (Baker's yeast)).